We begin with the raw amino-acid sequence, 294 residues long: Proteasome subunit beta (294 aa).

Residues 1–65 (MTADRPALRT…MESGDLAPHG (65 aa)) constitute a propeptide, removed in mature form; by autocatalysis. Threonine 66 (nucleophile) is an active-site residue.

It belongs to the peptidase T1B family. In terms of assembly, the 20S proteasome core is composed of 14 alpha and 14 beta subunits that assemble into four stacked heptameric rings, resulting in a barrel-shaped structure. The two inner rings, each composed of seven catalytic beta subunits, are sandwiched by two outer rings, each composed of seven alpha subunits. The catalytic chamber with the active sites is on the inside of the barrel. Has a gated structure, the ends of the cylinder being occluded by the N-termini of the alpha-subunits. Is capped by the proteasome-associated ATPase, ARC.

The protein localises to the cytoplasm. The catalysed reaction is Cleavage of peptide bonds with very broad specificity.. Its pathway is protein degradation; proteasomal Pup-dependent pathway. With respect to regulation, the formation of the proteasomal ATPase ARC-20S proteasome complex, likely via the docking of the C-termini of ARC into the intersubunit pockets in the alpha-rings, may trigger opening of the gate for substrate entry. Interconversion between the open-gate and close-gate conformations leads to a dynamic regulation of the 20S proteasome proteolysis activity. Component of the proteasome core, a large protease complex with broad specificity involved in protein degradation. In Rhodococcus jostii (strain RHA1), this protein is Proteasome subunit beta.